Here is a 324-residue protein sequence, read N- to C-terminus: Beta-ketoacyl-[acyl-carrier-protein] synthase III (324 aa).

Active-site residues include Cys112 and His251. The interval 252 to 256 (QANLR) is ACP-binding. Asn281 is a catalytic residue.

This sequence belongs to the thiolase-like superfamily. FabH family. Homodimer.

It localises to the cytoplasm. It carries out the reaction malonyl-[ACP] + acetyl-CoA + H(+) = 3-oxobutanoyl-[ACP] + CO2 + CoA. Its pathway is lipid metabolism; fatty acid biosynthesis. Catalyzes the condensation reaction of fatty acid synthesis by the addition to an acyl acceptor of two carbons from malonyl-ACP. Catalyzes the first condensation reaction which initiates fatty acid synthesis and may therefore play a role in governing the total rate of fatty acid production. Possesses both acetoacetyl-ACP synthase and acetyl transacylase activities. Its substrate specificity determines the biosynthesis of branched-chain and/or straight-chain of fatty acids. The chain is Beta-ketoacyl-[acyl-carrier-protein] synthase III from Clostridium perfringens (strain 13 / Type A).